The following is a 78-amino-acid chain: Short neurotoxin SNTX14 (78 aa).

The signal sequence occupies residues 1–21 (MKTLLLTFLVVTIVCLDLGYT). 4 disulfides stabilise this stretch: cysteine 24/cysteine 40, cysteine 33/cysteine 58, cysteine 62/cysteine 70, and cysteine 71/cysteine 76.

The protein belongs to the three-finger toxin family. Short-chain subfamily. Expressed by the venom gland.

Its subcellular location is the secreted. This three-finger toxin binds and inhibits the nicotinic acetylcholine receptor (nAChR). The polypeptide is Short neurotoxin SNTX14 (Ophiophagus hannah (King cobra)).